Here is a 383-residue protein sequence, read N- to C-terminus: tRNA-specific 2-thiouridylase MnmA (383 aa).

ATP contacts are provided by residues glycine 30 to serine 37 and leucine 56. Cysteine 117 serves as the catalytic Nucleophile. A disulfide bond links cysteine 117 and cysteine 216. Glycine 142 serves as a coordination point for ATP. Residues lysine 166 to glutamine 168 are interaction with tRNA. The Cysteine persulfide intermediate role is filled by cysteine 216. The interaction with tRNA stretch occupies residues arginine 321 to tyrosine 322.

The protein belongs to the MnmA/TRMU family.

It localises to the cytoplasm. It carries out the reaction S-sulfanyl-L-cysteinyl-[protein] + uridine(34) in tRNA + AH2 + ATP = 2-thiouridine(34) in tRNA + L-cysteinyl-[protein] + A + AMP + diphosphate + H(+). Catalyzes the 2-thiolation of uridine at the wobble position (U34) of tRNA, leading to the formation of s(2)U34. This Synechococcus sp. (strain CC9605) protein is tRNA-specific 2-thiouridylase MnmA.